Reading from the N-terminus, the 231-residue chain is ATP phosphoribosyltransferase (231 aa).

This sequence belongs to the ATP phosphoribosyltransferase family. Short subfamily. As to quaternary structure, heteromultimer composed of HisG and HisZ subunits.

Its subcellular location is the cytoplasm. The catalysed reaction is 1-(5-phospho-beta-D-ribosyl)-ATP + diphosphate = 5-phospho-alpha-D-ribose 1-diphosphate + ATP. The protein operates within amino-acid biosynthesis; L-histidine biosynthesis; L-histidine from 5-phospho-alpha-D-ribose 1-diphosphate: step 1/9. Its function is as follows. Catalyzes the condensation of ATP and 5-phosphoribose 1-diphosphate to form N'-(5'-phosphoribosyl)-ATP (PR-ATP). Has a crucial role in the pathway because the rate of histidine biosynthesis seems to be controlled primarily by regulation of HisG enzymatic activity. In Rhizobium meliloti (strain 1021) (Ensifer meliloti), this protein is ATP phosphoribosyltransferase (hisG).